A 2226-amino-acid polypeptide reads, in one-letter code: Histone-lysine N-methyltransferase ash1 (2226 aa).

The interval 1-145 is disordered; the sequence is MSCSQNETAA…SDSEDDLPLK (145 aa). The segment covering 32-52 has biased composition (polar residues); sequence ITDQSSQSKSIKSATQFSVQR. A compositionally biased stretch (basic residues) spans 99 to 111; it reads AVSKKVKVKRKKL. A phosphoserine mark is found at S135, S136, and S138. Phosphothreonine occurs at positions 200 and 201. The span at 260-269 shows a compositional bias: basic residues; that stretch reads PRKRRGRPKK. Disordered stretches follow at residues 260–324, 343–367, 673–695, 711–749, and 811–832; these read PRKR…IASS, RVLY…SSNK, AQQL…KRGL, SASA…HKLP, and KRHL…SNSP. The a.T hook 1 DNA-binding region spans 261 to 273; the sequence is RKRRGRPKKVVPT. The span at 294–306 shows a compositional bias: low complexity; the sequence is STTSTTQSTTPSP. Residues 307 to 324 show a composition bias toward polar residues; it reads KMQNENAVPTGSLPIASS. Low complexity predominate over residues 711-727; that stretch reads SASASGTPNGSGSSNGN. A phosphoserine mark is found at S740, S831, and S977. Positions 820 to 831 are enriched in low complexity; that stretch reads SVSGAGSSASNS. 2 disordered regions span residues 980–1026 and 1049–1230; these read QQTT…DCER and SVVA…TTSL. Residues 989–999 are compositionally biased toward acidic residues; sequence HEPEFDPDDEP. 2 DNA-binding regions (a.T hook) span residues 1065 to 1077 and 1095 to 1107; these read GRPR…NREQ and AKKR…QPVL. The segment covering 1108–1117 has biased composition (pro residues); that stretch reads EEPPPTPPPQ. Positions 1186–1200 are enriched in basic and acidic residues; that stretch reads AEAKRLDSIPTEHDP. Residues 1205–1219 show a composition bias toward polar residues; that stretch reads ESHNPGPQDYASCSE. The region spanning 1339–1387 is the AWS domain; the sequence is FDHPTCNCKNQGEKSCLDNCLNRMVYTECSPSNCPAGEKCRNQKIQRHA. The SET domain occupies 1390-1506; the sequence is PGVERFMTAD…EGEELTYDYN (117 aa). The Post-SET domain occupies 1514–1530; sequence EGQPCRCNTPQCRGVIG. Disordered regions lie at residues 1536 to 1575 and 1616 to 1648; these read VKPL…GKDI and RASD…SSPS. A compositionally biased stretch (basic residues) spans 1556 to 1568; the sequence is GRQRKQKAKKHAQ. Composition is skewed to low complexity over residues 1619 to 1628 and 1639 to 1648; these read DAAATASSPA and RRPSTPSSPS. The region spanning 1681-1789 is the Bromo domain; the sequence is KMAVVLRDIC…DSYEQQKIAS (109 aa). Positions 1808–1839 are disordered; that stretch reads PKEVLSSEEEPGKIAVKKSPGAKERDSPIVPL. A PHD-type zinc finger spans residues 1857 to 1903; that stretch reads VIRCICGLYKDEGLMIQCSKCMVWQHTECTKADIDADNYQCERCEPR. The 121-residue stretch at 1952 to 2072 folds into the BAH domain; sequence KVLPTKKHTY…KTARFFSKAK (121 aa). Positions 2205 to 2226 are disordered; sequence SGRGARQRKTQQSSSSSTANST. Low complexity predominate over residues 2214–2226; it reads TQQSSSSSTANST.

Belongs to the class V-like SAM-binding methyltransferase superfamily. Histone-lysine methyltransferase family. SET2 subfamily. Component of a large multiprotein complex distinct from complexes containing ash2 or brm. Interacts (via SET domain) with trx (via SET domain). Interacts with nej/cbp. Expressed throughout development but is present at higher levels during the embryonic and pupal stages than during the larval stages. During the larval stages it accumulates primarily in imaginal disks.

The protein resides in the nucleus. Its subcellular location is the chromosome. It catalyses the reaction L-lysyl(4)-[histone H3] + 3 S-adenosyl-L-methionine = N(6),N(6),N(6)-trimethyl-L-lysyl(4)-[histone H3] + 3 S-adenosyl-L-homocysteine + 3 H(+). Functionally, trithorax group (TrxG) protein that has histone methyltransferase activity. Specifically trimethylates 'Lys-4' of histone H3 (H3K4me3), a specific tag for epigenetic transcriptional activation. TrxG proteins are generally required to maintain the transcriptionally active state of homeotic genes throughout development. Does not act as a coactivator required for transcriptional activation, but specifically prevents inappropriate Polycomb Group (PcG) silencing of homeotic genes in cells in which they must stay transcriptionally active. The sequence is that of Histone-lysine N-methyltransferase ash1 (ash1) from Drosophila melanogaster (Fruit fly).